Here is a 1588-residue protein sequence, read N- to C-terminus: Ubiquitin carboxyl-terminal hydrolase 54 (1588 aa).

Arg12 bears the Omega-N-methylarginine mark. In terms of domain architecture, USP spans 31-352 (KGLSNEPGQN…QPLLLLYADP (322 aa)). Residue Cys42 is the Nucleophile of the active site. 12 residues coordinate Zn(2+): His67, Cys69, Cys74, Cys77, His133, Cys145, Cys150, His153, Cys166, Cys169, Cys225, and Cys229. Residue His302 is the Proton acceptor of the active site. Basic and acidic residues-rich tracts occupy residues 382–391 (GHLTDSECNQ) and 424–434 (SEGETLKEKQA). 3 disordered regions span residues 382–519 (GHLT…PTWR), 555–577 (FTPD…RSQH), and 601–624 (ESGY…PPDS). Position 424 is a phosphoserine (Ser424). Over residues 453–471 (TVSNMIHSRPSLASQTSAG) the composition is skewed to polar residues. Residues 499-513 (TESTSSEAKSSSSSK) show a composition bias toward low complexity. Basic and acidic residues predominate over residues 555 to 572 (FTPDEVSKPTANDIKDGG). Residues 601–616 (ESGYESSERNSSSPVS) show a composition bias toward low complexity. 2 positions are modified to phosphoserine: Ser613 and Ser616. Residues 682–712 (ELDELQEEVVRRAQEQELRKKREKELEAAKG) adopt a coiled-coil conformation. 4 disordered regions span residues 801-834 (RSLQ…PQPT), 1089-1182 (QNTS…PDMY), 1221-1242 (SQVK…SHPR), and 1491-1561 (WGNL…RSPG). The segment covering 808–826 (QQQASSQQPVQPSASLPSQ) has biased composition (low complexity). The span at 1126 to 1147 (GREHCRWVKQPRSPDGRERPPC) shows a compositional bias: basic and acidic residues. Ser1138 is subject to Phosphoserine. Polar residues predominate over residues 1510-1524 (PSSNLHVPLRSTWNS). Positions 1536–1547 (RRIDMPPDDDWR) are enriched in basic and acidic residues.

It belongs to the peptidase C19 family.

The catalysed reaction is Thiol-dependent hydrolysis of ester, thioester, amide, peptide and isopeptide bonds formed by the C-terminal Gly of ubiquitin (a 76-residue protein attached to proteins as an intracellular targeting signal).. Its function is as follows. Deubiquitinase that specifically mediates 'Lys-63'-linked deubiquitination of substrates with a polyubiquitin chain composed of at least 3 ubiquitins. Specifically recognizes ubiquitin chain in position S2 and catalyzes cleavage of polyubiquitin within 'Lys-63'-linked chains. Not able to deubiquitinate substrates with shorter ubiquitin chains. Mediates deubiquitination of PLK4, maintaining PLK4 stability by reducing its ubiquitination-mediated degradation. The sequence is that of Ubiquitin carboxyl-terminal hydrolase 54 (Usp54) from Mus musculus (Mouse).